A 190-amino-acid polypeptide reads, in one-letter code: Dynactin subunit 6 (190 aa).

Residue threonine 186 is modified to Phosphothreonine; by CDK1.

It belongs to the dynactin subunits 5/6 family. Dynactin subunit 6 subfamily. As to quaternary structure, subunit of dynactin, a multiprotein complex part of a tripartite complex with dynein and a adapter, such as BICDL1, BICD2 or HOOK3. The dynactin complex is built around ACTR1A/ACTB filament and consists of an actin-related filament composed of a shoulder domain, a pointed end and a barbed end. Its length is defined by its flexible shoulder domain. The soulder is composed of 2 DCTN1 subunits, 4 DCTN2 and 2 DCTN3. The 4 DCNT2 (via N-terminus) bind the ACTR1A filament and act as molecular rulers to determine the length. The pointed end is important for binding dynein-dynactin cargo adapters. Consists of 4 subunits: ACTR10, DCNT4, DCTN5 and DCTN6. Within the complex DCTN6 forms a heterodimer with DCTN5. The barbed end is composed of a CAPZA1:CAPZB heterodimers, which binds ACTR1A/ACTB filament and dynactin and stabilizes dynactin. Interacts with PLK1. Interacts with N4BP2L1. Post-translationally, phosphorylation at Thr-186 by CDK1 during mitotic prometaphase creates a binding site for PLK1 that facilitates its recruitment to kinetochores.

The protein resides in the cytoplasm. Its subcellular location is the cytoskeleton. The protein localises to the chromosome. It localises to the centromere. It is found in the kinetochore. In terms of biological role, part of the dynactin complex that activates the molecular motor dynein for ultra-processive transport along microtubules. The polypeptide is Dynactin subunit 6 (DCTN6) (Pongo abelii (Sumatran orangutan)).